We begin with the raw amino-acid sequence, 262 residues long: Indole-3-glycerol phosphate synthase (262 aa).

Belongs to the TrpC family.

The catalysed reaction is 1-(2-carboxyphenylamino)-1-deoxy-D-ribulose 5-phosphate + H(+) = (1S,2R)-1-C-(indol-3-yl)glycerol 3-phosphate + CO2 + H2O. Its pathway is amino-acid biosynthesis; L-tryptophan biosynthesis; L-tryptophan from chorismate: step 4/5. In Aromatoleum aromaticum (strain DSM 19018 / LMG 30748 / EbN1) (Azoarcus sp. (strain EbN1)), this protein is Indole-3-glycerol phosphate synthase.